The following is a 399-amino-acid chain: Elongation factor Tu (399 aa).

The tr-type G domain maps to 10–204 (KPHVNIGTIG…AVDTSIPEPE (195 aa)). The G1 stretch occupies residues 19–26 (GHVDHGKT). Residue 19 to 26 (GHVDHGKT) participates in GTP binding. Thr-26 lines the Mg(2+) pocket. The interval 60–64 (GITIN) is G2. The segment at 81–84 (DCPG) is G3. GTP is bound by residues 81–85 (DCPGH) and 136–139 (NKCD). Positions 136–139 (NKCD) are G4. Positions 174–176 (SGL) are G5.

Belongs to the TRAFAC class translation factor GTPase superfamily. Classic translation factor GTPase family. EF-Tu/EF-1A subfamily. In terms of assembly, monomer.

It localises to the cytoplasm. It carries out the reaction GTP + H2O = GDP + phosphate + H(+). In terms of biological role, GTP hydrolase that promotes the GTP-dependent binding of aminoacyl-tRNA to the A-site of ribosomes during protein biosynthesis. This chain is Elongation factor Tu, found in Prochlorococcus marinus (strain MIT 9303).